Consider the following 382-residue polypeptide: Guanylate kinase 1 (382 aa).

The 183-residue stretch at 128–310 (QKPIVISGPS…CYENLKKLLS (183 aa)) folds into the Guanylate kinase-like domain. An ATP-binding site is contributed by 135 to 142 (GPSGVGKG). Active-site residues include R168, R261, and R272. The ATP site is built by N295 and D296.

Belongs to the guanylate kinase family. Monomer.

The protein localises to the cytoplasm. It localises to the nucleus. The catalysed reaction is GMP + ATP = GDP + ADP. In terms of biological role, essential for recycling GMP and indirectly, cGMP. The chain is Guanylate kinase 1 (GK1) from Oryza sativa subsp. japonica (Rice).